The chain runs to 433 residues: Homogentisate 1,2-dioxygenase (433 aa).

Histidine 288 functions as the Proton acceptor in the catalytic mechanism. 2 residues coordinate Fe cation: histidine 331 and glutamate 337. Residues tyrosine 346 and histidine 367 each contribute to the homogentisate site. Histidine 367 contacts Fe cation.

It belongs to the homogentisate dioxygenase family. In terms of assembly, hexamer; dimer of trimers. Fe cation serves as cofactor.

The enzyme catalyses homogentisate + O2 = 4-maleylacetoacetate + H(+). The protein operates within amino-acid degradation; L-phenylalanine degradation; acetoacetate and fumarate from L-phenylalanine: step 4/6. Its function is as follows. Involved in the catabolism of homogentisate (2,5-dihydroxyphenylacetate or 2,5-OH-PhAc), a central intermediate in the degradation of phenylalanine and tyrosine. Catalyzes the oxidative ring cleavage of the aromatic ring of homogentisate to yield maleylacetoacetate. This Pseudomonas putida (strain GB-1) protein is Homogentisate 1,2-dioxygenase.